The following is a 1128-amino-acid chain: Phytochrome A (1128 aa).

The segment covering 1–21 has biased composition (low complexity); it reads MSSSRPTQCSSSSSRTRQSSR. The tract at residues 1–24 is disordered; that stretch reads MSSSRPTQCSSSSSRTRQSSRARI. Positions 219 to 404 constitute a GAF domain; the sequence is SMEVLCNTVV…VFAVHVNKEF (186 aa). Phytochromobilin is bound at residue C324. 2 consecutive PAS domains span residues 620–690 and 750–834; these read VTSE…LQGK and VEGD…LAGD. Positions 904–1124 constitute a Histidine kinase domain; it reads YMRHAINNPL…TFILSVELAS (221 aa).

Belongs to the phytochrome family. As to quaternary structure, homodimer. In terms of processing, contains one covalently linked phytochromobilin chromophore.

In terms of biological role, regulatory photoreceptor which exists in two forms that are reversibly interconvertible by light: the Pr form that absorbs maximally in the red region of the spectrum and the Pfr form that absorbs maximally in the far-red region. Photoconversion of Pr to Pfr induces an array of morphogenic responses, whereas reconversion of Pfr to Pr cancels the induction of those responses. Pfr controls the expression of a number of nuclear genes including those encoding the small subunit of ribulose-bisphosphate carboxylase, chlorophyll A/B binding protein, protochlorophyllide reductase, rRNA, etc. It also controls the expression of its own gene(s) in a negative feedback fashion. In Oryza sativa subsp. indica (Rice), this protein is Phytochrome A (PHYA).